The following is a 620-amino-acid chain: Chaperone protein HscA homolog (620 aa).

Belongs to the heat shock protein 70 family.

Chaperone involved in the maturation of iron-sulfur cluster-containing proteins. Has a low intrinsic ATPase activity which is markedly stimulated by HscB. The chain is Chaperone protein HscA homolog from Acinetobacter baumannii (strain SDF).